The following is a 222-amino-acid chain: Transmembrane reductase CYB561D2 (222 aa).

The Cytoplasmic segment spans residues 2–17; sequence ALSAETESHIYRALRT. The Cytochrome b561 domain occupies 14–217; that stretch reads ALRTASGAAA…NQVSNAYLYR (204 aa). The helical transmembrane segment at 18-38 threads the bilayer; the sequence is ASGAAAHLVALGFTIFVAVLA. At 39–46 the chain is on the lumenal side; the sequence is RPGSSLFS. The chain crosses the membrane as a helical span at residues 47-67; sequence WHPVLMSLAFSFLMTEALLVF. H48 is a heme b binding site. The Cytoplasmic portion of the chain corresponds to 68 to 85; it reads SPESSLLHSLSRKGRARC. Heme b contacts are provided by H86 and H120. The chain crosses the membrane as a helical span at residues 86-106; it reads HWVLQLLALLCALLGLGLVIL. Topologically, residues 107-122 are lumenal; sequence HKEQLGKAHLVTRHGQ. A helical membrane pass occupies residues 123–143; the sequence is AGLLAVLWAGLQCSGGVGLLY. At 144–162 the chain is on the cytoplasmic side; the sequence is PKLLPRWPLAKLKLYHATS. Heme b is bound at residue H159. A helical transmembrane segment spans residues 163–183; sequence GLVGYLLGSASLLLGMCSLWF. At 184 to 186 the chain is on the lumenal side; the sequence is TAS. The helical transmembrane segment at 187-207 threads the bilayer; it reads VTGAAWYLAVLCPVLTSLVIM. Residues 208 to 222 lie on the Cytoplasmic side of the membrane; that stretch reads NQVSNAYLYRKRIQP.

The cofactor is heme b.

It is found in the endoplasmic reticulum membrane. Its subcellular location is the cytoplasmic vesicle membrane. It carries out the reaction monodehydro-L-ascorbate radical(out) + L-ascorbate(in) = monodehydro-L-ascorbate radical(in) + L-ascorbate(out). It catalyses the reaction Fe(3+)(out) + L-ascorbate(in) = monodehydro-L-ascorbate radical(in) + Fe(2+)(out) + H(+). Functionally, transmembrane reductase that may use ascorbate as an electron donor in the cytoplasm and transfer electrons across endoplasmic reticulum membranes to reduce monodehydro-L-ascorbate radical and iron cations Fe(3+) in the lumen of that compartment. This is Transmembrane reductase CYB561D2 from Homo sapiens (Human).